Consider the following 262-residue polypeptide: Homeobox protein Nkx-6.3 (262 aa).

Positions 140 to 199 (KKHTRPTFTGHQIFALEKTFEQTKYLAGPERARLAYSLGMTESQVKVWFQNRRTKWRKKS) form a DNA-binding region, homeobox. Residues 197-237 (KKSALEPSSSTPRAPGGASGDRAASENEDDEYNKPLDPDSD) form a disordered region.

In terms of tissue distribution, expressed in the developing CNS and gastro-intestinal tract.

The protein localises to the nucleus. Its function is as follows. Putative transcription factor, which may be involved in patterning of central nervous system and pancreas. The protein is Homeobox protein Nkx-6.3 (Nkx6-3) of Mus musculus (Mouse).